Consider the following 424-residue polypeptide: Enolase (424 aa).

Gln-165 provides a ligand contact to (2R)-2-phosphoglycerate. Glu-207 functions as the Proton donor in the catalytic mechanism. Mg(2+)-binding residues include Asp-244, Glu-283, and Asp-310. Residues Lys-335, Arg-364, Ser-365, and Lys-386 each coordinate (2R)-2-phosphoglycerate. Lys-335 acts as the Proton acceptor in catalysis.

This sequence belongs to the enolase family. The cofactor is Mg(2+).

It localises to the cytoplasm. Its subcellular location is the secreted. The protein localises to the cell surface. It catalyses the reaction (2R)-2-phosphoglycerate = phosphoenolpyruvate + H2O. It participates in carbohydrate degradation; glycolysis; pyruvate from D-glyceraldehyde 3-phosphate: step 4/5. Its function is as follows. Catalyzes the reversible conversion of 2-phosphoglycerate (2-PG) into phosphoenolpyruvate (PEP). It is essential for the degradation of carbohydrates via glycolysis. The polypeptide is Enolase (Chlamydia felis (strain Fe/C-56) (Chlamydophila felis)).